A 304-amino-acid polypeptide reads, in one-letter code: Acetylglutamate kinase (304 aa).

Residues 74–75, Arg-96, and Asn-201 each bind substrate; that span reads GG.

The protein belongs to the acetylglutamate kinase family. ArgB subfamily.

It is found in the cytoplasm. The catalysed reaction is N-acetyl-L-glutamate + ATP = N-acetyl-L-glutamyl 5-phosphate + ADP. Its pathway is amino-acid biosynthesis; L-arginine biosynthesis; N(2)-acetyl-L-ornithine from L-glutamate: step 2/4. Its function is as follows. Catalyzes the ATP-dependent phosphorylation of N-acetyl-L-glutamate. This Alkalilimnicola ehrlichii (strain ATCC BAA-1101 / DSM 17681 / MLHE-1) protein is Acetylglutamate kinase.